Consider the following 669-residue polypeptide: Methionine--tRNA ligase (669 aa).

The 'HIGH' region motif lies at Tyr-14 to Asn-24. His-161 provides a ligand contact to Zn(2+). The short motif at Lys-309–Ser-313 is the 'KMSKS' region element. Lys-312 is an ATP binding site. The tRNA-binding domain maps to Asp-566–Ala-669.

Belongs to the class-I aminoacyl-tRNA synthetase family. MetG type 2B subfamily. In terms of assembly, homodimer.

It is found in the cytoplasm. It catalyses the reaction tRNA(Met) + L-methionine + ATP = L-methionyl-tRNA(Met) + AMP + diphosphate. Is required not only for elongation of protein synthesis but also for the initiation of all mRNA translation through initiator tRNA(fMet) aminoacylation. The protein is Methionine--tRNA ligase of Enterococcus faecalis (strain ATCC 700802 / V583).